The chain runs to 436 residues: UPF0597 protein YhaM (436 aa).

Belongs to the UPF0597 family.

The chain is UPF0597 protein YhaM from Salmonella choleraesuis (strain SC-B67).